The sequence spans 404 residues: Starvation-sensing protein RspA (404 aa).

This sequence belongs to the mandelate racemase/muconate lactonizing enzyme family.

Functionally, probably involved in the degradation of homoserine lactone (HSL) or of a metabolite of HSL that signals starvation. The polypeptide is Starvation-sensing protein RspA (Escherichia coli (strain K12)).